Here is a 792-residue protein sequence, read N- to C-terminus: Phenylalanine--tRNA ligase beta subunit (792 aa).

The 109-residue stretch at 39 to 147 (GESLGQVVVA…DDAPVGQALA (109 aa)) folds into the tRNA-binding domain. The region spanning 400 to 475 (PQPARILLRR…RIHGYDRVPT (76 aa)) is the B5 domain. Mg(2+)-binding residues include aspartate 453, aspartate 459, glutamate 462, and aspartate 463. Residues 698–791 (SRFPSVRRDL…IEREHRARIR (94 aa)) form the FDX-ACB domain.

The protein belongs to the phenylalanyl-tRNA synthetase beta subunit family. Type 1 subfamily. As to quaternary structure, tetramer of two alpha and two beta subunits. It depends on Mg(2+) as a cofactor.

It is found in the cytoplasm. The enzyme catalyses tRNA(Phe) + L-phenylalanine + ATP = L-phenylalanyl-tRNA(Phe) + AMP + diphosphate + H(+). The protein is Phenylalanine--tRNA ligase beta subunit of Xanthomonas oryzae pv. oryzae (strain MAFF 311018).